The following is a 423-amino-acid chain: CinA-like protein (423 aa).

Belongs to the CinA family.

The sequence is that of CinA-like protein from Chlorobium chlorochromatii (strain CaD3).